The sequence spans 1337 residues: Protein HEG homolog 1 (1337 aa).

An N-terminal signal peptide occupies residues 1–31; it reads MATPRAPRWPPPSLLLLLLLPLLLLPPAAPG. Low complexity-rich tracts occupy residues 28–40 and 54–66; these read AAPG…PSPA and PGAG…PGVA. Disordered regions lie at residues 28 to 149, 175 to 211, 235 to 296, 313 to 675, 723 to 767, and 860 to 909; these read AAPG…SNMA, SSLL…GFLE, ASHP…QNPS, VPRT…PSPI, LIPS…TVSL, and EGNR…PQTT. The Extracellular segment spans residues 32-1204; the sequence is ARGSLPSPAH…GLNCGNPYQL (1173 aa). Positions 118–131 are enriched in polar residues; it reads TAQNARMSHSSSEG. Positions 175–190 are enriched in low complexity; that stretch reads SSLLSLESLPESPSSS. Polar residues-rich tracts occupy residues 195–206, 247–258, 283–296, and 340–361; these read RITPSQTESGTS, VLSQKRNSSGQE, IKNG…QNPS, and GITS…NSGL. Positions 470–480 are enriched in gly residues; it reads RGGGEDSGMGG. Low complexity-rich tracts occupy residues 486 to 502 and 556 to 575; these read SSSS…LDSS and SYSE…DSPS. 2 stretches are compositionally biased toward polar residues: residues 576 to 585 and 592 to 617; these read QAQPKQSSMS and AQSS…NMPN. The span at 637–675 shows a compositional bias: low complexity; the sequence is PSTQPSPSQPQPFSSALPSTRSPGSTSETTTSSPSPSPI. Composition is skewed to polar residues over residues 725 to 742 and 751 to 763; these read PSNQ…QQEK and SLVS…TKAV. Over residues 868–884 the composition is skewed to low complexity; that stretch reads PTTQPIPLTTSTTSAGE. The segment covering 885–896 has biased composition (basic and acidic residues); the sequence is RTTELGRAEESS. The span at 897–909 shows a compositional bias: polar residues; it reads PSHFLTPSSPQTT. Residues 941–979 enclose the EGF-like 1 domain; it reads PVNSCTVNPCLHDGKCIVDLTGRGYRCVCPPAWQGENCS. Intrachain disulfides connect cysteine 945–cysteine 956, cysteine 950–cysteine 967, cysteine 969–cysteine 978, cysteine 985–cysteine 996, cysteine 990–cysteine 1005, and cysteine 1007–cysteine 1018. An EGF-like 2; calcium-binding domain is found at 981-1019; it reads DVNECLSSPCPPLATCNNTQGSFTCRCPVGYQLEKGICN. Asparagine 1093 carries N-linked (GlcNAc...) asparagine glycosylation. The chain crosses the membrane as a helical span at residues 1205–1225; sequence ITVVIAAAGGGLLLILGVALI. Topologically, residues 1226–1337 are cytoplasmic; that stretch reads VTCCRKSKND…SDESRRRDYF (112 aa). A Phosphoserine modification is found at serine 1315.

Interacts with CCM2 and KRIT1; KRIT1 markedly facilitates interaction with CCM2.

The protein resides in the cell membrane. Its subcellular location is the cell junction. Receptor component of the CCM signaling pathway which is a crucial regulator of heart and vessel formation and integrity. May be acting by stabilizing endothelial cell junctions. The sequence is that of Protein HEG homolog 1 (Heg1) from Mus musculus (Mouse).